An 88-amino-acid polypeptide reads, in one-letter code: ADRELKEMLLKKYSGCLSRLRSEFLKKRKKGKLPKDARSALMDWWNTHYRWPYPTEEDKVRLAAATGLDPKQINNWFINQRKRHWKPS.

One can recognise an ELK domain in the interval 4 to 24 (ELKEMLLKKYSGCLSRLRSEF). Positions 25–88 (LKKRKKGKLP…NQRKRHWKPS (64 aa)) form a DNA-binding region, homeobox; TALE-type.

This sequence belongs to the TALE/KNOX homeobox family.

The protein resides in the nucleus. Its function is as follows. Probably binds to the DNA sequence 5'-TGAC-3'. This chain is Homeobox protein knotted-1-like 11 (KNOX11), found in Zea mays (Maize).